A 154-amino-acid chain; its full sequence is Protein SprT-like (154 aa).

The SprT-like domain occupies 6 to 144; the sequence is LQQLTETISL…CGTCHGKLKF (139 aa). A Zn(2+)-binding site is contributed by H67. E68 is a catalytic residue. H71 lines the Zn(2+) pocket.

The protein belongs to the SprT family. The cofactor is Zn(2+).

It is found in the cytoplasm. This chain is Protein SprT-like, found in Shouchella clausii (strain KSM-K16) (Alkalihalobacillus clausii).